Consider the following 275-residue polypeptide: Ribosomal RNA small subunit methyltransferase A (275 aa).

S-adenosyl-L-methionine is bound by residues N19, L21, G46, E71, D94, and N117.

This sequence belongs to the class I-like SAM-binding methyltransferase superfamily. rRNA adenine N(6)-methyltransferase family. RsmA subfamily.

The protein resides in the cytoplasm. It carries out the reaction adenosine(1518)/adenosine(1519) in 16S rRNA + 4 S-adenosyl-L-methionine = N(6)-dimethyladenosine(1518)/N(6)-dimethyladenosine(1519) in 16S rRNA + 4 S-adenosyl-L-homocysteine + 4 H(+). Its function is as follows. Specifically dimethylates two adjacent adenosines (A1518 and A1519) in the loop of a conserved hairpin near the 3'-end of 16S rRNA in the 30S particle. May play a critical role in biogenesis of 30S subunits. The polypeptide is Ribosomal RNA small subunit methyltransferase A (Burkholderia lata (strain ATCC 17760 / DSM 23089 / LMG 22485 / NCIMB 9086 / R18194 / 383)).